An 899-amino-acid chain; its full sequence is Gamma-aminobutyric acid type B receptor subunit 1 (899 aa).

Residues 1 to 19 (MFVRSSWLLLWGTIVWASA) form the signal peptide. The Extracellular segment spans residues 20–447 (EPVTLHIGGT…KKHAMTVSNE (428 aa)). N-linked (GlcNAc...) asparagine glycosylation is found at asparagine 69, asparagine 266, asparagine 339, asparagine 353, and asparagine 371. A helical membrane pass occupies residues 448–468 (FYYPTILFAVLGIAACVFIYL). At 469–487 (FTQKHHERLIIFQSQPECN) the chain is on the cytoplasmic side. Residues 488 to 508 (NILLIGCSLCLFSLFLIGLPS) form a helical membrane-spanning segment. At 509–525 (DDISISESLFPLLCHAR) the chain is on the extracellular side. A helical transmembrane segment spans residues 526–546 (VTILLFGFTFAYGSMFAKVWI). Topologically, residues 547 to 616 (VHRMGATENQ…LNQPISSSKF (70 aa)) are cytoplasmic. Residues 617 to 637 (YVIVAALTAVDVFVCFVWVLI) traverse the membrane as a helical segment. At 638–674 (DPLHLTEQKFPLFTPADSEEDEMIMPVLQQCQSNQQE) the chain is on the extracellular side. Residues 675-695 (VWIGIIMGFKCLLLVFGTFLS) form a helical membrane-spanning segment. Topologically, residues 696–713 (YETRNLKLRFINDSRFVG) are cytoplasmic. A helical membrane pass occupies residues 714–734 (LAIYNVAVMTLVTAPVVTLLI). The Extracellular segment spans residues 735-741 (HGKVDAN). The helical transmembrane segment at 742-762 (FAFISLTVLICTYISVGLIYG) threads the bilayer. The Cytoplasmic segment spans residues 763–899 (PKIRHIIKVP…SSTSSDEILL (137 aa)). Residues 791-842 (KVDQKRYDMLKKENETLQIQIEEKERKIHECKERLEELTKNSETEDMNAQLL) adopt a coiled-coil conformation. A disordered region spans residues 870–899 (DLQNGNHPGQIYENDNDDDGSSTSSDEILL). Positions 890–899 (SSTSSDEILL) are enriched in low complexity.

It belongs to the G-protein coupled receptor 3 family. In terms of assembly, may form a heterodimer with gbb-2. In terms of tissue distribution, expressed in the nervous system, including cholinergic motor neurons, but not in GABAergic motor neurons or muscle.

It is found in the cell membrane. In terms of biological role, component of a heterodimeric G-protein coupled receptor for GABA, formed by gbb-1 and gbb-2. Within the heterodimeric GABA receptor, only gbb-1 seems to bind agonists, while gbb-2 mediates coupling to G proteins. Ligand binding causes a conformation change that triggers signaling via guanine nucleotide-binding proteins (G proteins) and modulates the activity of down-stream effectors, such as adenylate cyclase. Signaling inhibits adenylate cyclase, stimulates phospholipase A2, activates potassium channels, inactivates voltage-dependent calcium-channels and modulates inositol phospholipid hydrolysis. Calcium is required for high affinity binding to GABA. Plays a critical role in the fine-tuning of inhibitory synaptic transmission. Pre-synaptic GABA receptor inhibits neurotransmitter release by down-regulating high-voltage activated calcium channels, whereas postsynaptic GABA receptor decreases neuronal excitability by activating a prominent inwardly rectifying potassium (Kir) conductance that underlies the late inhibitory postsynaptic potentials. Along with gbb-2, may couple to the G(o)-alpha G-protein goa-1 to negatively regulate cholinergic receptor activity in the presence of high levels of acetylcholine in ventral cord motor neurons. As acetylcholine depolarizes body wall muscles, modulation of acetylcholine levels most likely results in the control of locomotory behavior. Acts in neurons to regulate lifespan, and this may be through G-protein-egl-8/PLC-beta signaling to the transcription factor daf-16/FOXO. In Caenorhabditis elegans, this protein is Gamma-aminobutyric acid type B receptor subunit 1.